The sequence spans 533 residues: Trigger factor (533 aa).

One can recognise a PPIase FKBP-type domain in the interval 164–249 (GDQLIIDFTG…VKQVKVETDT (86 aa)). The tract at residues 436-533 (EAAIEAEAEE…APAKKPAAKK (98 aa)) is disordered. Residues 465 to 477 (AAAKKAPAKKAPA) are compositionally biased toward basic residues. Residues 481–490 (AAKDGDEKPA) show a composition bias toward basic and acidic residues. 2 stretches are compositionally biased toward basic residues: residues 494–506 (APAK…KAST) and 515–533 (PAKK…AAKK).

This sequence belongs to the FKBP-type PPIase family. Tig subfamily.

The protein localises to the cytoplasm. The enzyme catalyses [protein]-peptidylproline (omega=180) = [protein]-peptidylproline (omega=0). Functionally, involved in protein export. Acts as a chaperone by maintaining the newly synthesized protein in an open conformation. Functions as a peptidyl-prolyl cis-trans isomerase. The sequence is that of Trigger factor from Erythrobacter litoralis (strain HTCC2594).